A 122-amino-acid polypeptide reads, in one-letter code: Small ribosomal subunit protein uS13 (122 aa).

Residues 99–122 (RGQRTHTNARTRKGPAKAIAGKKK) are disordered.

Belongs to the universal ribosomal protein uS13 family. Part of the 30S ribosomal subunit. Forms a loose heterodimer with protein S19. Forms two bridges to the 50S subunit in the 70S ribosome.

In terms of biological role, located at the top of the head of the 30S subunit, it contacts several helices of the 16S rRNA. In the 70S ribosome it contacts the 23S rRNA (bridge B1a) and protein L5 of the 50S subunit (bridge B1b), connecting the 2 subunits; these bridges are implicated in subunit movement. Contacts the tRNAs in the A and P-sites. The chain is Small ribosomal subunit protein uS13 from Sinorhizobium medicae (strain WSM419) (Ensifer medicae).